Here is a 151-residue protein sequence, read N- to C-terminus: UPF0178 protein YaiI (151 aa).

It belongs to the UPF0178 family.

The polypeptide is UPF0178 protein YaiI (Salmonella choleraesuis (strain SC-B67)).